The following is a 340-amino-acid chain: Chorismate mutase 1, chloroplastic (340 aa).

Residues 1–65 constitute a chloroplast transit peptide; the sequence is MEASLLMRSS…KPRSGTSSVH (65 aa). N-acetylalanine is present on A66. An L-phenylalanine-binding site is contributed by R79. The region spanning 79–340 is the Chorismate mutase domain; the sequence is RVDESESLTL…QVEYLLRRLD (262 aa). Residues R150 and 211-214 contribute to the L-tyrosine site; that span reads NYGS. An L-phenylalanine-binding site is contributed by 211 to 214; the sequence is NYGS.

As to quaternary structure, homodimer. As to expression, expressed in roots, shoots, rosette leaves, stems, cauline leaves, flowers and siliques.

It is found in the plastid. Its subcellular location is the chloroplast. The catalysed reaction is chorismate = prephenate. It participates in metabolic intermediate biosynthesis; prephenate biosynthesis; prephenate from chorismate: step 1/1. Its activity is regulated as follows. Allosterically inhibited by tyrosine and phenylalanine. Activated by tryptophan. In terms of biological role, may play a role in chloroplast biogenesis. The polypeptide is Chorismate mutase 1, chloroplastic (Arabidopsis thaliana (Mouse-ear cress)).